The sequence spans 295 residues: Malonyl-[acyl-carrier protein] O-methyltransferase (295 aa).

It belongs to the methyltransferase superfamily.

The catalysed reaction is malonyl-[ACP] + S-adenosyl-L-methionine = malonyl-[ACP] methyl ester + S-adenosyl-L-homocysteine. Its pathway is cofactor biosynthesis; biotin biosynthesis. Converts the free carboxyl group of a malonyl-thioester to its methyl ester by transfer of a methyl group from S-adenosyl-L-methionine (SAM). It allows to synthesize pimeloyl-ACP via the fatty acid synthetic pathway. This is Malonyl-[acyl-carrier protein] O-methyltransferase from Xylella fastidiosa (strain M23).